Reading from the N-terminus, the 430-residue chain is 3-phosphoshikimate 1-carboxyvinyltransferase (430 aa).

3 residues coordinate 3-phosphoshikimate: K20, S21, and R25. K20 provides a ligand contact to phosphoenolpyruvate. Residues G92 and R120 each coordinate phosphoenolpyruvate. Residues S166, Q168, D312, and K339 each contribute to the 3-phosphoshikimate site. A phosphoenolpyruvate-binding site is contributed by Q168. Residue D312 is the Proton acceptor of the active site. Phosphoenolpyruvate is bound by residues R343 and R387.

Belongs to the EPSP synthase family. As to quaternary structure, monomer.

It is found in the cytoplasm. The enzyme catalyses 3-phosphoshikimate + phosphoenolpyruvate = 5-O-(1-carboxyvinyl)-3-phosphoshikimate + phosphate. The protein operates within metabolic intermediate biosynthesis; chorismate biosynthesis; chorismate from D-erythrose 4-phosphate and phosphoenolpyruvate: step 6/7. Catalyzes the transfer of the enolpyruvyl moiety of phosphoenolpyruvate (PEP) to the 5-hydroxyl of shikimate-3-phosphate (S3P) to produce enolpyruvyl shikimate-3-phosphate and inorganic phosphate. This Lactococcus lactis subsp. cremoris (strain MG1363) protein is 3-phosphoshikimate 1-carboxyvinyltransferase.